Consider the following 129-residue polypeptide: MAKTPVRARKRVKKQVVDGVAHIHASFNNTIVTITDRQGNALAWATAGGSGFRGSRKSTPFAAQVAAERCAEVVKEFGLKNLEVMVKGPGPGRESTIRALNAAGFRITNITDVTPIPHNGCRPPKKRRV.

This sequence belongs to the universal ribosomal protein uS11 family. Part of the 30S ribosomal subunit. Interacts with proteins S7 and S18. Binds to IF-3.

In terms of biological role, located on the platform of the 30S subunit, it bridges several disparate RNA helices of the 16S rRNA. Forms part of the Shine-Dalgarno cleft in the 70S ribosome. In Pasteurella multocida (strain Pm70), this protein is Small ribosomal subunit protein uS11.